A 410-amino-acid chain; its full sequence is Putative competence-damage inducible protein (410 aa).

It belongs to the CinA family.

The polypeptide is Putative competence-damage inducible protein (Finegoldia magna (strain ATCC 29328 / DSM 20472 / WAL 2508) (Peptostreptococcus magnus)).